The chain runs to 540 residues: Beta-secretase (540 aa).

The N-terminal stretch at 1–31 is a signal peptide; the sequence is MHFSLPTSRIVVVVPAAAICIVCVLIETCTA. In terms of domain architecture, Peptidase A1 spans 81–435; sequence YYIEVDIGTP…DRENKRVGFA (355 aa). Catalysis depends on residues Asp-99 and Asp-302. Intrachain disulfides connect Cys-222-Cys-439, Cys-291-Cys-469, and Cys-345-Cys-397. Residues 483 to 503 traverse the membrane as a helical segment; the sequence is ITAYVLAAICLVCLIPVIVFA. Residues 504–540 are Cytoplasmic-facing; the sequence is LTHQINKRCKGRRGRGVVNHHRLDQEGLAENEPNSDP.

This sequence belongs to the peptidase A1 family.

It localises to the membrane. This is Beta-secretase from Strongylocentrotus purpuratus (Purple sea urchin).